The following is a 402-amino-acid chain: Succinyl-CoA--D-citramalate CoA-transferase (402 aa).

Catalysis depends on D174, which acts as the Nucleophile.

The protein belongs to the CoA-transferase III family. In terms of assembly, homodimer.

The enzyme catalyses (3R)-citramalate + succinyl-CoA = (3R)-citramalyl-CoA + succinate. It carries out the reaction (R)-malate + succinyl-CoA = (R)-malyl-CoA + succinate. Its function is as follows. Involved in the 3-hydroxypropionate cycle used for autotrophic carbon dioxide fixation, and in the glyoxylate assimilation cycle used to regenerate acetyl-CoA and produce pyruvate as universal precursor for biosynthesis. Catalyzes the transfer of CoA moiety from succinyl-CoA to D-citramalate to yield citramalyl-CoA. This chain is Succinyl-CoA--D-citramalate CoA-transferase, found in Chloroflexus aurantiacus (strain ATCC 29366 / DSM 635 / J-10-fl).